We begin with the raw amino-acid sequence, 488 residues long: UDP-N-acetylmuramate--L-alanine ligase (488 aa).

127-133 (GTHGKTT) provides a ligand contact to ATP.

It belongs to the MurCDEF family.

The protein resides in the cytoplasm. The catalysed reaction is UDP-N-acetyl-alpha-D-muramate + L-alanine + ATP = UDP-N-acetyl-alpha-D-muramoyl-L-alanine + ADP + phosphate + H(+). Its pathway is cell wall biogenesis; peptidoglycan biosynthesis. Functionally, cell wall formation. The sequence is that of UDP-N-acetylmuramate--L-alanine ligase from Shewanella baltica (strain OS223).